The sequence spans 351 residues: F-box protein At1g47810 (351 aa).

In terms of domain architecture, F-box spans 8–54; it reads LQSLDPIPVDVLFEIFLNLPAKFLARFVCVSKLWAKIIRNQDFIRSF.

The chain is F-box protein At1g47810 from Arabidopsis thaliana (Mouse-ear cress).